The sequence spans 738 residues: Integrin beta-2-like protein (738 aa).

A signal peptide spans 1-22; it reads MLGQCTLLPVLAGLLSLESALS. The Extracellular portion of the chain corresponds to 23-671; sequence QLCTKDNVST…LVCAEISNTT (649 aa). One can recognise a PSI domain in the interval 24–74; the sequence is LCTKDNVSTCQDCIRSGPSCAWCQKLNFTGRGEPDSVRCDTPEQLLLKGCT. Cystine bridges form between C25/C419, C33/C43, C36/C73, C46/C62, C218/C258, C358/C372, C421/C439, C431/C442, C444/C453, C455/C486, C469/C484, C478/C489, C491/C506, C508/C531, C513/C529, C521/C534, C536/C545, C547/C570, C554/C568, C562/C573, C575/C584, C594/C603, and C600/C664. The N-linked (GlcNAc...) asparagine glycan is linked to N29. N-linked (GlcNAc...) asparagine glycans are attached at residues N50, N102, N173, N226, N252, N342, N360, and N386. The VWFA domain occupies 126-329; sequence SVDLYFLMGL…DSSNVAQLIR (204 aa). I-EGF domains are found at residues 421-454, 455-507, 508-546, and 547-585; these read CQEQ…KNCE, CQTQ…QYCE, CNNV…SACQ, and CRMS…PLCE. Residue N473 is glycosylated (N-linked (GlcNAc...) asparagine). N-linked (GlcNAc...) asparagine glycans are attached at residues N627 and N669. The chain crosses the membrane as a helical span at residues 672–692; that stretch reads ILLGVIVGVLLAVIFLLVYCM. The Cytoplasmic portion of the chain corresponds to 693 to 738; that stretch reads VYLKGTQKAAKLPRKGGAQSTLAQQPHFQEPHHVEPVWNQERQGTQ. The interval 709–738 is disordered; it reads GAQSTLAQQPHFQEPHHVEPVWNQERQGTQ. Residues 710–719 are compositionally biased toward polar residues; that stretch reads AQSTLAQQPH.

This sequence belongs to the integrin beta chain family. As to quaternary structure, monomer and homodimer. Unlike integrin beta chains, no alpha chain partner has yet been found. Post-translationally, N-glycosylated. Expressed predominantly in maturing and mature neutrophils.

It localises to the cell membrane. During inflammatory stimulation, plays a role in retaining Cxcl13-expressing cells at the site of the inflammatory response. This is Integrin beta-2-like protein from Mus musculus (Mouse).